Reading from the N-terminus, the 586-residue chain is Pectinesterase 1 (586 aa).

A signal peptide spans 1–49 (MDSVNSFKGYGKVDEAQDLALKKKTRKRLLLLSISVVVLIAVIIAAVVA). Asn57, Asn97, Asn154, Asn201, and Asn207 each carry an N-linked (GlcNAc...) asparagine glycan. The RRLM cleavage motif motif lies at 250 to 253 (RRLM). An RRLL cleavage motif motif is present at residues 269-272 (RRLL). Residues Thr355 and Gln385 each coordinate substrate. Asp408 acts as the Proton donor in catalysis. The cysteines at positions 422 and 442 are disulfide-linked. The active-site Nucleophile is the Asp429. N-linked (GlcNAc...) asparagine glycosylation occurs at Asn466. Substrate is bound by residues Arg492 and Trp494.

The protein in the N-terminal section; belongs to the PMEI family. This sequence in the C-terminal section; belongs to the pectinesterase family. Interacts with SBT6.1. As to expression, expressed in siliques.

The protein localises to the secreted. The protein resides in the cell wall. It localises to the golgi apparatus membrane. It catalyses the reaction [(1-&gt;4)-alpha-D-galacturonosyl methyl ester](n) + n H2O = [(1-&gt;4)-alpha-D-galacturonosyl](n) + n methanol + n H(+). It functions in the pathway glycan metabolism; pectin degradation; 2-dehydro-3-deoxy-D-gluconate from pectin: step 1/5. Acts in the modification of cell walls via demethylesterification of cell wall pectin. Demethylates protein phosphatase 2A (PP2A) that have been reversibly carboxymethylated by LCMT1. Acts as a negative regulators of genes involved in salt stress response. The sequence is that of Pectinesterase 1 (PME1) from Arabidopsis thaliana (Mouse-ear cress).